The chain runs to 592 residues: Aspartate--tRNA ligase (592 aa).

Residue Glu-171 participates in L-aspartate binding. The tract at residues 195–198 (QLFK) is aspartate. Arg-217 provides a ligand contact to L-aspartate. Residues 217–219 (RDE) and Gln-226 each bind ATP. Position 448 (His-448) interacts with L-aspartate. Residue Glu-482 participates in ATP binding. Position 489 (Arg-489) interacts with L-aspartate. 534 to 537 (GLDR) contacts ATP.

Belongs to the class-II aminoacyl-tRNA synthetase family. Type 1 subfamily. In terms of assembly, homodimer.

Its subcellular location is the cytoplasm. It carries out the reaction tRNA(Asp) + L-aspartate + ATP = L-aspartyl-tRNA(Asp) + AMP + diphosphate. Catalyzes the attachment of L-aspartate to tRNA(Asp) in a two-step reaction: L-aspartate is first activated by ATP to form Asp-AMP and then transferred to the acceptor end of tRNA(Asp). This is Aspartate--tRNA ligase from Vibrio campbellii (strain ATCC BAA-1116).